Here is a 279-residue protein sequence, read N- to C-terminus: Phosphonates import ATP-binding protein PhnC 2 (279 aa).

Positions 10–253 (LSLKGVSVRY…VARNLYAKQS (244 aa)) constitute an ABC transporter domain. 43-50 (GASGAGKS) serves as a coordination point for ATP. The segment covering 253–262 (SNASNTSAST) has biased composition (low complexity). The segment at 253 to 279 (SNASNTSASTDSPRTLQSSQTKELLPC) is disordered. The span at 263–279 (DSPRTLQSSQTKELLPC) shows a compositional bias: polar residues.

It belongs to the ABC transporter superfamily. Phosphonates importer (TC 3.A.1.9.1) family. As to quaternary structure, the complex is composed of two ATP-binding proteins (PhnC), two transmembrane proteins (PhnE) and a solute-binding protein (PhnD).

It localises to the cell inner membrane. It catalyses the reaction phosphonate(out) + ATP + H2O = phosphonate(in) + ADP + phosphate + H(+). Functionally, part of the ABC transporter complex PhnCDE involved in phosphonates import. Responsible for energy coupling to the transport system. The sequence is that of Phosphonates import ATP-binding protein PhnC 2 from Cupriavidus metallidurans (strain ATCC 43123 / DSM 2839 / NBRC 102507 / CH34) (Ralstonia metallidurans).